The primary structure comprises 341 residues: S-adenosylmethionine:tRNA ribosyltransferase-isomerase (341 aa).

This sequence belongs to the QueA family. As to quaternary structure, monomer.

The protein resides in the cytoplasm. The catalysed reaction is 7-aminomethyl-7-carbaguanosine(34) in tRNA + S-adenosyl-L-methionine = epoxyqueuosine(34) in tRNA + adenine + L-methionine + 2 H(+). Its pathway is tRNA modification; tRNA-queuosine biosynthesis. In terms of biological role, transfers and isomerizes the ribose moiety from AdoMet to the 7-aminomethyl group of 7-deazaguanine (preQ1-tRNA) to give epoxyqueuosine (oQ-tRNA). This is S-adenosylmethionine:tRNA ribosyltransferase-isomerase from Halothermothrix orenii (strain H 168 / OCM 544 / DSM 9562).